A 240-amino-acid polypeptide reads, in one-letter code: 1-(5-phosphoribosyl)-5-[(5-phosphoribosylamino)methylideneamino] imidazole-4-carboxamide isomerase (240 aa).

Asp-9 serves as the catalytic Proton acceptor. The Proton donor role is filled by Asp-131.

The protein belongs to the HisA/HisF family.

It localises to the cytoplasm. It catalyses the reaction 1-(5-phospho-beta-D-ribosyl)-5-[(5-phospho-beta-D-ribosylamino)methylideneamino]imidazole-4-carboxamide = 5-[(5-phospho-1-deoxy-D-ribulos-1-ylimino)methylamino]-1-(5-phospho-beta-D-ribosyl)imidazole-4-carboxamide. Its pathway is amino-acid biosynthesis; L-histidine biosynthesis; L-histidine from 5-phospho-alpha-D-ribose 1-diphosphate: step 4/9. The chain is 1-(5-phosphoribosyl)-5-[(5-phosphoribosylamino)methylideneamino] imidazole-4-carboxamide isomerase from Cytophaga hutchinsonii (strain ATCC 33406 / DSM 1761 / CIP 103989 / NBRC 15051 / NCIMB 9469 / D465).